Here is a 210-residue protein sequence, read N- to C-terminus: 2-Cys peroxiredoxin BAS1, chloroplastic (210 aa).

The transit peptide at 1–10 (DARARSFVAR) directs the protein to the chloroplast. Positions 18–177 (PLVGNKAPDF…TLRTLQALQY (160 aa)) constitute a Thioredoxin domain. Catalysis depends on Cys64, which acts as the Cysteine sulfenic acid (-SOH) intermediate.

This sequence belongs to the peroxiredoxin family. AhpC/Prx1 subfamily. As to quaternary structure, homodimer; disulfide-linked, upon oxidation. In terms of tissue distribution, expressed in leaf blade, sheath, basiplast, stem and green spike. Maximal expression in young developing shoots segments where cell division and elongation take place. Not expressed in roots.

The protein resides in the plastid. Its subcellular location is the chloroplast. The catalysed reaction is a hydroperoxide + [thioredoxin]-dithiol = an alcohol + [thioredoxin]-disulfide + H2O. Thiol-specific peroxidase that catalyzes the reduction of hydrogen peroxide and organic hydroperoxides to water and alcohols, respectively. Plays a role in cell protection against oxidative stress by detoxifying peroxides. May be an antioxidant enzyme particularly in the developing shoot and photosynthesizing leaf. This chain is 2-Cys peroxiredoxin BAS1, chloroplastic (BAS1), found in Hordeum vulgare (Barley).